The primary structure comprises 438 residues: GTPase Der (438 aa).

2 consecutive EngA-type G domains span residues 4 to 168 (PIVA…NDPS) and 177 to 352 (IRIA…DNYS). GTP is bound by residues 10-17 (GRPNVGKS), 57-61 (DTGGI), 120-123 (NKID), 183-190 (GKPNVGKS), 230-234 (DTAGL), and 295-298 (NKWD). The KH-like domain maps to 353–437 (KRVSTGLLND…GIEIEYRARK (85 aa)).

This sequence belongs to the TRAFAC class TrmE-Era-EngA-EngB-Septin-like GTPase superfamily. EngA (Der) GTPase family. In terms of assembly, associates with the 50S ribosomal subunit.

In terms of biological role, GTPase that plays an essential role in the late steps of ribosome biogenesis. This Clostridium perfringens (strain ATCC 13124 / DSM 756 / JCM 1290 / NCIMB 6125 / NCTC 8237 / Type A) protein is GTPase Der.